Reading from the N-terminus, the 146-residue chain is Hemoglobin subunit beta-2 (146 aa).

One can recognise a Globin domain in the interval 2–146; that stretch reads HWTAEEKQLV…VAHALAYHYH (145 aa). Residues histidine 63 and histidine 92 each contribute to the heme b site.

Belongs to the globin family. In terms of assembly, there are three forms of hemoglobin in Sphenodon: A, A' and D. Hb A is a tetramer of two alpha-A and two beta-1, Hb A' is a tetramer of two alpha-a and two beta-2, Hb D is a tetramer of two alpha-D and two beta-2.

Functionally, involved in oxygen transport from the lung to the various peripheral tissues. The sequence is that of Hemoglobin subunit beta-2 (HBB2) from Sphenodon punctatus (Tuatara).